A 904-amino-acid polypeptide reads, in one-letter code: Envelope glycoprotein B (904 aa).

The signal sequence occupies residues 1–22; sequence MRGGGLICALVVGALVAAVASA. Residues 23–771 lie on the Virion surface side of the membrane; that stretch reads APAAPAAPRA…SGVSSFMSNP (749 aa). The interval 40-83 is disordered; that stretch reads VAANGGPASRPPPVPSPATTKARKRKTKKPPKRPEATPPPDANA. Positions 60 to 70 are enriched in basic residues; that stretch reads KARKRKTKKPP. N82 and N136 each carry an N-linked (GlcNAc...) asparagine; by host glycan. Intrachain disulfides connect C111-C570, C128-C526, C202-C266, C359-C407, and C593-C630. Involved in fusion and/or binding to host membrane regions lie at residues 168-174 and 253-260; these read VWFGHRY and RVEAFHRY. N-linked (GlcNAc...) asparagine; by host glycans are attached at residues N393, N425, and N486. The interval 467 to 490 is disordered; it reads QDRKPRNATPAPLREAPSANASVE. Residue N671 is glycosylated (N-linked (GlcNAc...) asparagine; by host). Hydrophobic membrane proximal region stretches follow at residues 716 to 769 and 728 to 768; these read IDTV…SFMS and MFAG…SSFM. A helical membrane pass occupies residues 772–792; it reads FGALAVGLLVLAGLVAAFFAF. Residues 793-904 are Intravirion-facing; sequence RYVLQLQRNP…EDEAGDEDEL (112 aa). A disordered region spans residues 816–835; that stretch reads TSDPGGVGGEGEEGAEGGGF. A Golgi targeting motif is present at residues 849–852; the sequence is YMAL. Residues 883–904 are disordered; it reads KRNKARYSPLHNEDEAGDEDEL. An Internalization motif motif is present at residues 889 to 892; that stretch reads YSPL.

This sequence belongs to the herpesviridae glycoprotein B family. Homotrimer; disulfide-linked. Binds to heparan sulfate proteoglycans. Interacts with gH/gL heterodimer.

It is found in the virion membrane. Its subcellular location is the host cell membrane. The protein localises to the host endosome membrane. It localises to the host Golgi apparatus membrane. In terms of biological role, envelope glycoprotein that forms spikes at the surface of virion envelope. Essential for the initial attachment to heparan sulfate moieties of the host cell surface proteoglycans. Involved in fusion of viral and cellular membranes leading to virus entry into the host cell. Following initial binding to its host receptors, membrane fusion is mediated by the fusion machinery composed at least of gB and the heterodimer gH/gL. May be involved in the fusion between the virion envelope and the outer nuclear membrane during virion egress. The sequence is that of Envelope glycoprotein B from Homo sapiens (Human).